The following is a 269-amino-acid chain: Senescence-associated protein 13 (269 aa).

21-45 contacts NADP(+); the sequence is LVTGGSKGIGEAVVEELAMLGAKVH. Ser-154 provides a ligand contact to substrate. Tyr-167 serves as the catalytic Proton acceptor.

This sequence belongs to the short-chain dehydrogenases/reductases (SDR) family. SDR65C subfamily.

Functionally, unspecific reductase providing both diastereomeric alcohols from the prochiral ketones. Active on cyclic monoterpenes and small flexible lipophilic carbonyls. No activity with tropinone, nitrogen-containing tropinone analogs, tropine or pseudotropine as substrate. The polypeptide is Senescence-associated protein 13 (Arabidopsis thaliana (Mouse-ear cress)).